We begin with the raw amino-acid sequence, 790 residues long: MELSEGELSHTSSSSSFVPVDQRQLQDAIQIIDENKHFNTGILDYINKTSPADVGNNYHIISVFGSQSTGKSTLLNRLFNTNFDVMDESNRQQTTKGIWLAYSPVVSTTLGHTTSKSNILVMDVEGTDGRERGEDQDFERKAALFALSTSEVLIINIWETQVGLYQGANMGLLKTVFEVNLSLFGKSKLETHNDHKVLLLIVIRDHVGVTPVESLAKTFTSDLQNMWSSLAKPAELEHLQFADFFDVTFHALNHKVLQPKEFGEGINRLDDRLVVSNELFKPEYHHDVPIDGWTMYAERCWEQIETNKDLDLPTQQILVAQFKCDEIVESVFQEFLAKYQHHFKEVDAAPDFEELGALFADLRQDAFEDYDASASRYNKAVYEQKRKKLRWLINDKLKEVFDVHAKNLCNTLLEKFEKDLVALKGKDFAVNVKTLSTKLVEDVNFQVSLMSLQGDLSLDEIILALTKDIDAIVAKQQVIELNSIVNKSVKKLSASLSKSIQFELGDPNEETWDNVLQQFKGVYEKFGGDFGLGTSSTQNQQAIEKFKFKSWCQFYDVTHKLISREKLLALLQDRFDDKFRYDENGLPKLYLNEQDLEKTFAVAKQHALQVLPILTFAKLADGSEIVPDYDIFDSKLREQFLGGYDDSDDEEDHCFAEIITEQEKSEVLAKFKKEVDAKYIETKRSIVQHITQIPYYIYLIILVLGWNEFMAIIRNPLFFSLSIVLGATVYVLYYLGLLRPALVVAQRTMDEVIVMAKTKLREVLIDDHEVTGRQLNKMAGSKENIELDDM.

The Cytoplasmic segment spans residues Met-1–Gln-692. In terms of domain architecture, GB1/RHD3-type G spans Gly-55 to Tyr-284. Residue Gly-65–Ser-72 coordinates GTP. The chain crosses the membrane as a helical span at residues Ile-693 to Ile-713. The Lumenal segment spans residues Arg-714–Pro-716. Residues Leu-717–Leu-737 traverse the membrane as a helical segment. Over Leu-738–Met-790 the chain is Cytoplasmic.

Belongs to the TRAFAC class dynamin-like GTPase superfamily. GB1/RHD3 GTPase family. RHD3 subfamily.

Its subcellular location is the endoplasmic reticulum membrane. Functionally, cooperates with the reticulon proteins and tubule-shaping DP1 family proteins to generate and maintain the structure of the tubular endoplasmic reticulum network. Has GTPase activity, which is required for its function in ER organization. Required for virulence and resistance to cycloheximide. The protein is Protein SEY1 of Candida albicans (strain SC5314 / ATCC MYA-2876) (Yeast).